Consider the following 218-residue polypeptide: UPF0319 protein swp_2242 (218 aa).

The signal sequence occupies residues 1–21; that stretch reads MRLSQSVLTALLICVNSAAFA.

Belongs to the UPF0319 family.

The sequence is that of UPF0319 protein swp_2242 from Shewanella piezotolerans (strain WP3 / JCM 13877).